A 334-amino-acid chain; its full sequence is Geminin coiled-coil domain-containing protein 1 (334 aa).

Positions Ser82–Leu119 form a coiled coil. The disordered stretch occupies residues Phe143–Lys167.

Belongs to the GEMC1 family. Post-translationally, highly phosphorylated by CDK2; stimulates initiation of DNA replication.

It is found in the nucleus. Its function is as follows. Regulator of DNA replication. Promotes initiation of chromosomal DNA replication by mediating TOPBP1- and CDK2-dependent recruitment of CDC45L onto replication origins. The protein is Geminin coiled-coil domain-containing protein 1 (GMNC) of Homo sapiens (Human).